The following is a 662-amino-acid chain: Bifunctional polymyxin resistance protein ArnA (662 aa).

The segment at 1–307 (MTSKAVVFAY…ELGLVEGARL (307 aa)) is formyltransferase ArnAFT. Residue His-106 is the Proton donor; for formyltransferase activity of the active site. Residues Arg-116 and 138–142 (VERAD) contribute to the (6R)-10-formyltetrahydrofolate site. The dehydrogenase ArnADH stretch occupies residues 316 to 662 (RRTRVLILGV…EALREREAQA (347 aa)). NAD(+) is bound by residues Asp-349 and 370 to 371 (DI). Residues Ala-395, Tyr-400, and 434 to 435 (TS) each bind UDP-alpha-D-glucuronate. Glu-436 acts as the Proton acceptor; for decarboxylase activity in catalysis. UDP-alpha-D-glucuronate contacts are provided by residues Arg-462, Asn-493, 527–536 (RLVDGGAQKR), and Tyr-614. Arg-620 acts as the Proton donor; for decarboxylase activity in catalysis.

This sequence in the N-terminal section; belongs to the Fmt family. UDP-L-Ara4N formyltransferase subfamily. It in the C-terminal section; belongs to the NAD(P)-dependent epimerase/dehydratase family. UDP-glucuronic acid decarboxylase subfamily. Homohexamer, formed by a dimer of trimers.

It catalyses the reaction UDP-alpha-D-glucuronate + NAD(+) = UDP-beta-L-threo-pentopyranos-4-ulose + CO2 + NADH. It carries out the reaction UDP-4-amino-4-deoxy-beta-L-arabinose + (6R)-10-formyltetrahydrofolate = UDP-4-deoxy-4-formamido-beta-L-arabinose + (6S)-5,6,7,8-tetrahydrofolate + H(+). It functions in the pathway nucleotide-sugar biosynthesis; UDP-4-deoxy-4-formamido-beta-L-arabinose biosynthesis; UDP-4-deoxy-4-formamido-beta-L-arabinose from UDP-alpha-D-glucuronate: step 1/3. The protein operates within nucleotide-sugar biosynthesis; UDP-4-deoxy-4-formamido-beta-L-arabinose biosynthesis; UDP-4-deoxy-4-formamido-beta-L-arabinose from UDP-alpha-D-glucuronate: step 3/3. Its pathway is bacterial outer membrane biogenesis; lipopolysaccharide biosynthesis. In terms of biological role, bifunctional enzyme that catalyzes the oxidative decarboxylation of UDP-glucuronic acid (UDP-GlcUA) to UDP-4-keto-arabinose (UDP-Ara4O) and the addition of a formyl group to UDP-4-amino-4-deoxy-L-arabinose (UDP-L-Ara4N) to form UDP-L-4-formamido-arabinose (UDP-L-Ara4FN). The modified arabinose is attached to lipid A and is required for resistance to polymyxin and cationic antimicrobial peptides. This chain is Bifunctional polymyxin resistance protein ArnA, found in Pseudomonas paraeruginosa (strain DSM 24068 / PA7) (Pseudomonas aeruginosa (strain PA7)).